The chain runs to 180 residues: Transcription factor HES-7.1-A (180 aa).

A bHLH domain is found at 13-70 (HRKLLKPLVEKRRRERINNSLEKLRIFLFQTLKSEKLKNPKVEKAEILECTVQFLQSR). The Orange domain maps to 84–116 (YQSGFQHCLETTLHFMNSKPDMNGVTKELLSHQ). A WRPW motif motif is present at residues 176–179 (WRPW).

In terms of assembly, transcription repression requires formation of a complex with a corepressor protein of the Groucho/TLE family. As to expression, expressed in the presumptive midbrain-hindbrain boundary (MHB) as early as the early gastrula stage (stage 10.5). Expression in the MHB continues through to tailbud stage. Also transiently expressed in the eye anlage at late neurula stage.

It localises to the nucleus. In terms of biological role, transcriptional repressor. Represses transcription from both N box- and E box-containing promoters. Demarcates the prospective midbrain-hindbrain boundary (MHB) region in the neuroectoderm in early gastrulae embryos by repressing transcription of a number of target genes. This is Transcription factor HES-7.1-A (hes7.1-a) from Xenopus laevis (African clawed frog).